The sequence spans 307 residues: tRNA dimethylallyltransferase (307 aa).

Residue 10-17 (GPTAVGKT) participates in ATP binding. 12 to 17 (TAVGKT) provides a ligand contact to substrate. An interaction with substrate tRNA region spans residues 35 to 38 (DSMQ).

This sequence belongs to the IPP transferase family. As to quaternary structure, monomer. It depends on Mg(2+) as a cofactor.

The enzyme catalyses adenosine(37) in tRNA + dimethylallyl diphosphate = N(6)-dimethylallyladenosine(37) in tRNA + diphosphate. Catalyzes the transfer of a dimethylallyl group onto the adenine at position 37 in tRNAs that read codons beginning with uridine, leading to the formation of N6-(dimethylallyl)adenosine (i(6)A). This chain is tRNA dimethylallyltransferase, found in Ligilactobacillus salivarius (strain UCC118) (Lactobacillus salivarius).